The chain runs to 541 residues: Glucose-6-phosphate isomerase (541 aa).

Glutamate 353 serves as the catalytic Proton donor. Catalysis depends on residues histidine 384 and lysine 504.

It belongs to the GPI family.

It is found in the cytoplasm. It catalyses the reaction alpha-D-glucose 6-phosphate = beta-D-fructose 6-phosphate. It participates in carbohydrate biosynthesis; gluconeogenesis. Its pathway is carbohydrate degradation; glycolysis; D-glyceraldehyde 3-phosphate and glycerone phosphate from D-glucose: step 2/4. Its function is as follows. Catalyzes the reversible isomerization of glucose-6-phosphate to fructose-6-phosphate. The sequence is that of Glucose-6-phosphate isomerase from Deinococcus radiodurans (strain ATCC 13939 / DSM 20539 / JCM 16871 / CCUG 27074 / LMG 4051 / NBRC 15346 / NCIMB 9279 / VKM B-1422 / R1).